We begin with the raw amino-acid sequence, 196 residues long: Ribosome maturation factor RimP (196 aa).

Residues 163 to 196 are disordered; the sequence is GLAPSKPTGPAPKRPKPKTNSSSNEPAAKKPRAE.

It belongs to the RimP family.

It localises to the cytoplasm. Its function is as follows. Required for maturation of 30S ribosomal subunits. The protein is Ribosome maturation factor RimP of Stenotrophomonas maltophilia (strain R551-3).